The primary structure comprises 379 residues: UDP-N-acetylglucosamine--N-acetylmuramyl-(pentapeptide) pyrophosphoryl-undecaprenol N-acetylglucosamine transferase (379 aa).

Residues 17 to 19 (TGG), asparagine 128, arginine 169, serine 197, and glutamine 298 each bind UDP-N-acetyl-alpha-D-glucosamine.

This sequence belongs to the glycosyltransferase 28 family. MurG subfamily.

It localises to the cell inner membrane. It carries out the reaction di-trans,octa-cis-undecaprenyl diphospho-N-acetyl-alpha-D-muramoyl-L-alanyl-D-glutamyl-meso-2,6-diaminopimeloyl-D-alanyl-D-alanine + UDP-N-acetyl-alpha-D-glucosamine = di-trans,octa-cis-undecaprenyl diphospho-[N-acetyl-alpha-D-glucosaminyl-(1-&gt;4)]-N-acetyl-alpha-D-muramoyl-L-alanyl-D-glutamyl-meso-2,6-diaminopimeloyl-D-alanyl-D-alanine + UDP + H(+). It functions in the pathway cell wall biogenesis; peptidoglycan biosynthesis. In terms of biological role, cell wall formation. Catalyzes the transfer of a GlcNAc subunit on undecaprenyl-pyrophosphoryl-MurNAc-pentapeptide (lipid intermediate I) to form undecaprenyl-pyrophosphoryl-MurNAc-(pentapeptide)GlcNAc (lipid intermediate II). The sequence is that of UDP-N-acetylglucosamine--N-acetylmuramyl-(pentapeptide) pyrophosphoryl-undecaprenol N-acetylglucosamine transferase from Brucella canis (strain ATCC 23365 / NCTC 10854 / RM-666).